The chain runs to 74 residues: Guanine nucleotide-binding protein G(T) subunit gamma-T1 (74 aa).

Cysteine methyl ester is present on cysteine 71. Residue cysteine 71 is the site of S-farnesyl cysteine attachment. The propeptide at 72 to 74 (VIS) is removed in mature form.

The protein belongs to the G protein gamma family. G proteins are composed of 3 units, alpha, beta and gamma. Retinal rod outer segment.

The protein localises to the cell membrane. In terms of biological role, guanine nucleotide-binding proteins (G proteins) are involved as a modulator or transducer in various transmembrane signaling systems. The beta and gamma chains are required for the GTPase activity, for replacement of GDP by GTP, and for G protein-effector interaction. The polypeptide is Guanine nucleotide-binding protein G(T) subunit gamma-T1 (GNGT1) (Bos taurus (Bovine)).